The primary structure comprises 292 residues: MASFAQWVSGARPRTLPNAIAPVVAGTGAAAWLHAAVWWKALLALAVAVALVIGVNYANDYSDGIRGTDDDRVGPVRLVGSRLATPRSVLTAAMTSLALGALAGLVLALLSAPWLIAVGAICIAGAWLYTGGSKPYGYAGFGELAVFVFFGPVAVLGTQYTQALRVDWVGLAQAVATGALSCSVLVANNLRDIPTDARADKITLAVRLGDARTRMLYQGLLAVAGVLTFVLMLATPWCVVGLVAAPLALRAAGPVRSGRGGRELIPVLRDTGLAMLVWALAVAGALAFGQLS.

6 helical membrane passes run 35–55, 101–121, 137–157, 166–186, 220–240, and 271–291; these read AAVW…VIGV, ALAG…VGAI, GYAG…AVLG, VDWV…SVLV, LLAV…WCVV, and TGLA…FGQL.

Belongs to the MenA family. Type 1 subfamily. The cofactor is Mg(2+).

It is found in the cell membrane. It carries out the reaction an all-trans-polyprenyl diphosphate + 1,4-dihydroxy-2-naphthoate + H(+) = a 2-demethylmenaquinol + CO2 + diphosphate. Its pathway is quinol/quinone metabolism; menaquinone biosynthesis; menaquinol from 1,4-dihydroxy-2-naphthoate: step 1/2. Its activity is regulated as follows. Activity is abolished by EDTA. Inhibited by Ro 48-8071, which is non-competitive with regard to DHNA and competitive with regard to the isoprenyldiphosphate substrate. Conversion of 1,4-dihydroxy-2-naphthoate (DHNA) to demethylmenaquinone (DMK). Can use a variety of allylic isoprenyl diphosphates as substrates but has a requirement for at least three isoprene units. The chain is 1,4-dihydroxy-2-naphthoate octaprenyltransferase from Mycobacterium tuberculosis (strain ATCC 25618 / H37Rv).